The sequence spans 85 residues: Small ribosomal subunit protein bS18c (85 aa).

The protein belongs to the bacterial ribosomal protein bS18 family. Part of the 30S ribosomal subunit.

It is found in the plastid. The protein localises to the chloroplast. In Zygnema circumcarinatum (Green alga), this protein is Small ribosomal subunit protein bS18c.